A 645-amino-acid polypeptide reads, in one-letter code: Zinc finger protein 235 (645 aa).

Residues 8-86 form the KRAB domain; sequence VTFRDVAVVF…TSHDVNKLAR (79 aa). Disordered regions lie at residues 112–144 and 255–280; these read GAEQPSQAPEDDGCLENLPSNHSSSSDNQEFLS and KKSPVHSTHKDTRHSPSVPIQPSVHP. Positions 129–144 are enriched in polar residues; sequence LPSNHSSSSDNQEFLS. 13 consecutive C2H2-type zinc fingers follow at residues 285 to 307, 313 to 335, 341 to 363, 369 to 391, 397 to 419, 425 to 447, 453 to 475, 481 to 503, 509 to 531, 537 to 559, 565 to 587, 593 to 615, and 621 to 643; these read YWCHECGKGFRQSSALQTHQRVH, YRCDSCGKGFSRSSDLNIHRRVH, YKCEVCGKGFTQWAHLQAHERIH, YKCGDCGKRFSCSSNLHTHQRVH, YECNECGKRFSLSGNLDIHQRVH, YKCEECGKGFSSASSFQSHQRVH, FHCSVCGKNFSRSSHFLDHQRIH, YRCEVCGKRFPWSLSLHSHQSVH, YKCGECGKGFSHASSLQAHHSVH, FKCNVCQKQFSKTSNLQAHQRVH, YKCDTCGKAFSQKSSLQVHQRIH, FKCEECGKEFRWSVGLSSHQRVH, and YTCQQCGKGFSQASYFHMHQRVH.

Belongs to the krueppel C2H2-type zinc-finger protein family.

Its subcellular location is the nucleus. May be involved in transcriptional regulation. The polypeptide is Zinc finger protein 235 (Znf235) (Mus musculus (Mouse)).